A 2035-amino-acid polypeptide reads, in one-letter code: MDRNYPSAGFGDPLGAGAGWSYERSAKASLVYGSSRTSHPETDILHRQAYAAPHPLQSYATNHHPAGLSGLFDTGLHHAGSAGPDASVMNLISALESRGPQPGPSASSLLSQFRSPSWQTAMHTPGPTELFISGALPGSSTFPSSSALSAYQHPASFGSRPFPVPSSLSLQDPPFSPPANGLLSPHDVLHLKPSQAPTVPSSLGFERLAGGGVLGPAGLGPAQTPPYRPGPPDPPPPPRHLPTQFNLLASSSAATAAEPSSPQLYNFSGAAPGPPPERALPRQDTVIKHYQRPASAQPPPPPPPAHSLQHYLSCGGSYPSMGHRASLACSPLGGGEPSPGAGEPSKGGPSGATAGAAGRATGPETAGGGAAGGGGGYRPIIQSPGYKTSKGGYGPATGGATRPPPPRSTATPKCQSLGGPAAAYAAGKASGAGGAGSQAYSPGQPQGLLGPQAYGQGFGGGQAQDLSKGPSYSGGPPQPPSGPPPPGLATCQSYSPDQLQGQLYGVQSEPYPGPAAHSQGLPTASPSLSYSTGHSPALSGHGGGWGPSSLGGGGEASPSHIIRPLQSPPATGRPPGVGSPGAPGKYLSSVLASAPFLAPPGASSYAAGAGGYKGKGDGSELLAGPGGSAAERTEDEEFLIQHLLQAPSPPRTSGADGLVGEDGPADAAKGLGGSGGAGGAPGTPYELAKEDPQRYHLQSVIRTSASLDEGATAALELGLGRMKDKKKGPERGGETPEGLATSVVHYGAGAKELGAFLQKSPPPPPPSAQATQPAPHGLLLEAGGPDLPMVLPPPPPQLLPSVLSHAPSPSPSAPKVGVHLLEPATRDGAPQPPPPPPPPMPLQLEAHLRGHGLEPTAPSPRLRPEESLEPPGAMQELLGALEPLPSGPGDPGVGPPNSEGKDPAGAYRSPSPQGTKAPRFVPLTSICFPDSLLQDEERSFFPTMEEMFGGGAADDYGKAGQTEDDGDPKTGAGPPPGPTAYDPYGPYCGGRASGTGPETPGLGLDHNKPPELPSTVNAEPLGLIQSGPHQSAPPPPPPPPPPPPVSEPKGGLTSPIFCSTKPKKLLKTSSFHLLRRRDPPFQTPKKLYAQEYEFEADEDKADVPADIRLNPRRLPDLVSSCRSRPALSPLGDIDFCPPNPGPDGPRRRGRKPTKAKRDGPPRPRGRPRIRPLEGPAMAGPASITTDGAKKPRGRGRGRGRKAEEMGGTRLEPLKPLKIKLSVPKAGEGLGAPSNDVISGVDHNSLDSNLTREKIEAKIKEVEEKQPEMKSGFMASFLDFLKSGKRHPPLYQAGLTPPLSPPKSVPASVPTRGLQPPPPTVPTVPHPAPSGPFGLGGALEAAESEGLGLGCPSPCKRLDEELKRNLETLPSFSSDEEDSVAKNRDLQESISSAISALDDPPLTGPKDTSTPEEPPLDTGPTASGPPPLPSLPSSNSSGTPEPPLLEEKPPPTPPPAPTPQPAPPPPPPPPPVPALPSPTPLVTPVASSPPPPPPPPPPPPALPSPPPPPPPAPTTVPPVAPPEEPPAPSPEDPEPPDARPLHLAKKQETAAVCGETDEEAGESGGEGIFRERDEFVIRAEDIPSLKLALQTGREPPPIWRVQKALLQKFTPEIKDGQRQFCATSNYLGYFGDAKNRYQRLYVKFLENVNKKDYVRVCARKPWHRPPLPVRRSGQTKGPTPVGGNSAPPSKVQAPPPKPETPEKMTSEKPPEPAPEPAVPEPPAPEKPSPPRPVEKEKEKEKEKEKEKERVTRPLRSERATSGRQMRTDRSLATGQSTTSRLPKARPSKVKAEPPPKKRKKWLKEAVGNASAGDGPGGSSSDSESSPGAPSEDERAVPGRLLKTRAMREMYRSYVEMLVSTALDPDMIQALEDTHDELYLPPMRKIDGLLNEHKKKVLKRLSLSPALQDALHTFPQLQVEQTGEGSPEEGAVRLRPAGEPYNRKTLSKLKRSVVRAQEFKVELEKSGYYTLYHSLHHYKYHTFLRCRDQTLAIEGGAEDLGQEEVVQQCMRNQPWLEQLFDSFSDLLAQAQAHSRCG.

Disordered regions lie at residues 210–280 (GGGV…ERAL), 292–311 (RPAS…LQHY), 329–584 (CSPL…GAPG), and 645–685 (QAPS…GTPY). A compositionally biased stretch (pro residues) spans 223-240 (QTPPYRPGPPDPPPPPRH). Residues 249 to 261 (ASSSAATAAEPSS) show a composition bias toward low complexity. Pro residues predominate over residues 296-305 (AQPPPPPPPA). Phosphoserine occurs at positions 330 and 338. Residues 338–364 (SPGAGEPSKGGPSGATAGAAGRATGPE) are compositionally biased toward low complexity. Gly residues predominate over residues 365–377 (TAGGGAAGGGGGY). 2 stretches are compositionally biased toward low complexity: residues 408 to 429 (STAT…AGKA) and 437 to 455 (SQAY…QAYG). Pro residues predominate over residues 476 to 487 (PPQPPSGPPPPG). Composition is skewed to polar residues over residues 490-501 (TCQSYSPDQLQG) and 520-534 (GLPT…STGH). A compositionally biased stretch (gly residues) spans 540–555 (GHGGGWGPSSLGGGGE). Position 648 is a phosphoserine (Ser648). Gly residues predominate over residues 670 to 681 (GLGGSGGAGGAP). Phosphothreonine is present on Thr735. Disordered regions lie at residues 755–844 (AFLQ…PLQL), 851–870 (HGLE…SLEP), 879–920 (GALE…APRF), and 946–1061 (EMFG…CSTK). Pro residues predominate over residues 830 to 841 (PQPPPPPPPPMP). Ser859 is subject to Phosphoserine. A compositionally biased stretch (pro residues) spans 1031–1046 (SAPPPPPPPPPPPPVS). 2 positions are modified to phosphoserine: Ser1070 and Ser1128. Disordered stretches follow at residues 1112–1244 (RRLP…DHNS), 1288–1355 (PLYQ…SPCK), 1367–1567 (TLPS…GEGI), and 1662–1839 (HRPP…PGRL). The span at 1190 to 1199 (KPRGRGRGRG) shows a compositional bias: basic residues. The span at 1200-1214 (RKAEEMGGTRLEPLK) shows a compositional bias: basic and acidic residues. Lys1214 is subject to N6-acetyllysine. Residue Thr1295 is modified to Phosphothreonine. Ser1299 is subject to Phosphoserine. A compositionally biased stretch (pro residues) spans 1314 to 1329 (QPPPPTVPTVPHPAPS). Ser1372, Ser1373, and Ser1378 each carry phosphoserine. Positions 1449–1529 (PPTPPPAPTP…PPEEPPAPSP (81 aa)) are enriched in pro residues. A compositionally biased stretch (basic and acidic residues) spans 1535–1547 (PDARPLHLAKKQE). Thr1555 carries the phosphothreonine modification. Ser1562 carries the phosphoserine modification. Over residues 1698 to 1709 (ETPEKMTSEKPP) the composition is skewed to basic and acidic residues. Thr1699 is modified (phosphothreonine). Positions 1710-1730 (EPAPEPAVPEPPAPEKPSPPR) are enriched in pro residues. Residues 1731 to 1768 (PVEKEKEKEKEKEKEKERVTRPLRSERATSGRQMRTDR) show a composition bias toward basic and acidic residues. Polar residues predominate over residues 1769 to 1779 (SLATGQSTTSR). The span at 1817-1828 (SSSDSESSPGAP) shows a compositional bias: low complexity. Position 1924 is a phosphoserine (Ser1924).

Expressed in brain.

Its subcellular location is the nucleus. The protein localises to the postsynaptic density. The protein resides in the synapse. It is found in the synaptosome. The polypeptide is Proline-rich protein 12 (Mus musculus (Mouse)).